Reading from the N-terminus, the 348-residue chain is MNRSSFDLLSTVEYGGCSAKLDPAKLSELLHDIPLPVDSRIMVDVSTHDDAGVYRLNDDTALIVTTDFFPPVCSDPYTFGRIAAANALSDVYAMGGRPLLVLNLTMFPSEGIPVEVLADILRGGQQTIDESGAFTMGGHTIDDPIPKYGLAVTGIVHPEHLVTNAGVRAGQCLVLTKPLGIGVAMAAHRLGLIGSEVYEAAIGQMCLLNRAGAELMQKYGIRGATDITGFGLLGHAKGLAEASDVCLHIDSRSVPVLPECLSLLRDGCIPGAAFRNLRFVGDMLRADCPTEYKMLLADAQTSGGLLMAVDADRAEDLVADLHRTGLHPFAAIIGYATDAEDAAKLIVT.

Residue Cys-17 is part of the active site. ATP-binding positions include Lys-20 and 47–49; that span reads THD. Position 50 (Asp-50) interacts with Mg(2+). Residues Asp-67, Asp-90, and 138-140 each bind ATP; that span reads GHT. A Mg(2+)-binding site is contributed by Asp-90. Asp-226 contacts Mg(2+).

It belongs to the selenophosphate synthase 1 family. Class I subfamily. As to quaternary structure, homodimer. Mg(2+) is required as a cofactor.

It catalyses the reaction hydrogenselenide + ATP + H2O = selenophosphate + AMP + phosphate + 2 H(+). Synthesizes selenophosphate from selenide and ATP. The sequence is that of Selenide, water dikinase from Porphyromonas gingivalis (strain ATCC BAA-308 / W83).